The sequence spans 1502 residues: G patch domain-containing protein 8 (1502 aa).

The 47-residue stretch at 40–86 (SDNIGHRLLQKHGWKLGQGLGKSLQGRTDPIPIVVKYDVMGMGRMEM) folds into the G-patch domain. The stretch at 89–124 (DYAEDATERRRVLEVEKEDTEELRQKYKDYVDKEKA) forms a coiled coil. The C2H2-type zinc-finger motif lies at 136–160 (FYCELCDKQYQKHQEFDNHINSYDH). The tract at residues 172–251 (REFARNVSSR…GATASCGLGS (80 aa)) is disordered. Over residues 182-206 (SRKDEKKQEKALRRLHELAEQRKQA) the composition is skewed to basic and acidic residues. Residues 223 to 233 (VDEEGGEDDKD) are compositionally biased toward acidic residues. K311 is covalently cross-linked (Glycyl lysine isopeptide (Lys-Gly) (interchain with G-Cter in SUMO2)). Basic and acidic residues-rich tracts occupy residues 323-339 (AEEG…EKSS) and 424-436 (NTTH…ESKK). Disordered stretches follow at residues 323 to 391 (AEEG…ATEP) and 419 to 541 (QMDG…FPVL). The span at 459 to 472 (SEVSEQPKETSMTE) shows a compositional bias: polar residues. N6-acetyllysine is present on K479. Phosphoserine is present on S491. Residues 491–519 (SDQSLESHSQKVSETQMCESNSSKETSLA) are compositionally biased toward polar residues. K577 is covalently cross-linked (Glycyl lysine isopeptide (Lys-Gly) (interchain with G-Cter in SUMO2)). Basic and acidic residues-rich tracts occupy residues 579–623 (SRNK…EKIV) and 653–670 (SETE…ERSG). A disordered region spans residues 579–1301 (SRNKDARTKG…ESTDGAEDAS (723 aa)). Residue S653 is modified to Phosphoserine. Basic residues predominate over residues 671–692 (KSHRHKKKKKHKKSSKHKRKHK). A compositionally biased stretch (basic and acidic residues) spans 693-707 (ADTEEKSSKAESGEK). Residues 708-720 (SKKRKKRKRKKNK) are compositionally biased toward basic residues. Over residues 733-743 (PEPPGSGSPAP) the composition is skewed to pro residues. S738, S740, and S758 each carry phosphoserine. Basic and acidic residues predominate over residues 750–772 (AQDDSQRRSLPAEEGSSGKKDEG). 2 stretches are compositionally biased toward basic residues: residues 799–809 (AGTKRSSRSSH) and 852–867 (SRSR…RSSR). Low complexity predominate over residues 868–896 (RSYSSSSDASSDQSCYSRQRSYSDDSYSD). S911 and S914 each carry phosphoserine. Residues 919 to 928 (SKHRSKRHKY) are compositionally biased toward basic residues. Phosphoserine is present on residues S981, S1009, S1014, S1033, and S1035. Residues 1010-1027 (WGHESPEERHSGRRDFIR) show a composition bias toward basic and acidic residues. Residues 1042–1059 (GRGEGPGKKDDGRGDDSK) show a composition bias toward basic and acidic residues. Phosphoserine is present on S1081. 2 stretches are compositionally biased toward basic and acidic residues: residues 1093–1108 (LLEK…KPSV) and 1159–1171 (KKCE…RGEE). K1105 participates in a covalent cross-link: Glycyl lysine isopeptide (Lys-Gly) (interchain with G-Cter in SUMO2). Position 1107 is a phosphoserine (S1107). Phosphoserine is present on S1175.

The protein is G patch domain-containing protein 8 (GPATCH8) of Homo sapiens (Human).